The chain runs to 196 residues: Ribosomal RNA small subunit methyltransferase G (196 aa).

S-adenosyl-L-methionine contacts are provided by residues glycine 77, phenylalanine 82, 127–128, and arginine 140; that span reads AE.

Belongs to the methyltransferase superfamily. RNA methyltransferase RsmG family.

The protein localises to the cytoplasm. Functionally, specifically methylates the N7 position of a guanine in 16S rRNA. This is Ribosomal RNA small subunit methyltransferase G from Aquifex aeolicus (strain VF5).